The chain runs to 360 residues: Peptide chain release factor 1 (360 aa).

At Gln-237 the chain carries N5-methylglutamine.

This sequence belongs to the prokaryotic/mitochondrial release factor family. Methylated by PrmC. Methylation increases the termination efficiency of RF1.

The protein localises to the cytoplasm. Its function is as follows. Peptide chain release factor 1 directs the termination of translation in response to the peptide chain termination codons UAG and UAA. The protein is Peptide chain release factor 1 of Pseudomonas putida (strain GB-1).